The primary structure comprises 179 residues: UPF0227 protein Shewmr4_1727 (179 aa).

It belongs to the UPF0227 family.

This Shewanella sp. (strain MR-4) protein is UPF0227 protein Shewmr4_1727.